We begin with the raw amino-acid sequence, 382 residues long: tRNA (guanine-N(7)-)-methyltransferase non-catalytic subunit wuho (382 aa).

The disordered stretch occupies residues 40–59 (VKDTDAGNEPNGNQTQPTPA). The segment covering 49–59 (PNGNQTQPTPA) has biased composition (polar residues). 2 WD repeats span residues 149–190 (GHMS…ECFC) and 192–230 (GHTE…ELSK).

The protein belongs to the WD repeat TRM82 family. As to quaternary structure, forms a heterodimer with the catalytic subunit.

It is found in the nucleus. It functions in the pathway tRNA modification; N(7)-methylguanine-tRNA biosynthesis. Required for the formation of N(7)-methylguanine at position 46 (m7G46) in tRNA. In the complex, it is required to stabilize and induce conformational changes of the catalytic subunit. The protein is tRNA (guanine-N(7)-)-methyltransferase non-catalytic subunit wuho of Anopheles gambiae (African malaria mosquito).